The primary structure comprises 117 residues: Large ribosomal subunit protein uL22 (117 aa).

Belongs to the universal ribosomal protein uL22 family. Part of the 50S ribosomal subunit.

In terms of biological role, this protein binds specifically to 23S rRNA; its binding is stimulated by other ribosomal proteins, e.g. L4, L17, and L20. It is important during the early stages of 50S assembly. It makes multiple contacts with different domains of the 23S rRNA in the assembled 50S subunit and ribosome. The globular domain of the protein is located near the polypeptide exit tunnel on the outside of the subunit, while an extended beta-hairpin is found that lines the wall of the exit tunnel in the center of the 70S ribosome. The sequence is that of Large ribosomal subunit protein uL22 from Lactobacillus gasseri (strain ATCC 33323 / DSM 20243 / BCRC 14619 / CIP 102991 / JCM 1131 / KCTC 3163 / NCIMB 11718 / NCTC 13722 / AM63).